Here is a 231-residue protein sequence, read N- to C-terminus: Isoprenyl transferase (231 aa).

D14 is an active-site residue. D14 serves as a coordination point for Mg(2+). Substrate-binding positions include 15 to 18 (GNGR), W19, R27, H31, and 59 to 61 (STE). The active-site Proton acceptor is N62. Substrate is bound by residues W63, R65, R176, and 182–184 (RIS). Residue E195 coordinates Mg(2+).

The protein belongs to the UPP synthase family. Homodimer. Requires Mg(2+) as cofactor.

Functionally, catalyzes the condensation of isopentenyl diphosphate (IPP) with allylic pyrophosphates generating different type of terpenoids. In Aquifex pyrophilus, this protein is Isoprenyl transferase.